An 81-amino-acid polypeptide reads, in one-letter code: MPNIKSQKKRVLTNEKSRASNKAIKSEIRTAIKKALAAKKDEATDATDLINHAVSLVDKGVKKGILKPNKAAREKSRLMQA.

Over residues 1–11 (MPNIKSQKKRV) the composition is skewed to basic residues. The tract at residues 1–20 (MPNIKSQKKRVLTNEKSRAS) is disordered.

It belongs to the bacterial ribosomal protein bS20 family.

Its function is as follows. Binds directly to 16S ribosomal RNA. The chain is Small ribosomal subunit protein bS20 from Mesoplasma florum (strain ATCC 33453 / NBRC 100688 / NCTC 11704 / L1) (Acholeplasma florum).